The following is a 444-amino-acid chain: MKAFMLAGVSSGIGKTTISMALMSVFNNVSPFKVGPDYIDPGFHEFITGNKSYNLDIFMMGEQGVKYSFYKHHKDISIIEGVMGLYDGMDNSLDNNSSAHIARFLGVPVILVLDGVGKSTSIAAQVLGYKMLDPRVNISGVIINKVSSAKTYAIFKEAIEKYTGVKCLGFVEKNDKLNISSQHLGLLQASEVEDLREKLSILKNLVLQNIDLKEIEKIASEQTRTFNENETEIEPPLYISYLKDRYVGKIIAIAQDRAFSFYYNDNIEFLEYMGFKVKYFSPLKDSKVPECDIIYLGGGYPENFAEELSNNKEMFNSIRKNYEQGKNILAECGGFMYLSNGIEQIEGKVYQMCGLVPCVVNMTNRLDISRFGYILINNKNDIEIARGHEFHYSKLKAVLEDTRKFKAVKKDGRTWECIFNEKNLYAGYPHIHFFGSYKFIEEVF.

The GATase cobBQ-type domain maps to 250-438; that stretch reads IIAIAQDRAF…PHIHFFGSYK (189 aa). C332 functions as the Nucleophile in the catalytic mechanism.

The protein belongs to the CobB/CbiA family. It depends on Mg(2+) as a cofactor.

It carries out the reaction cob(II)yrinate + 2 L-glutamine + 2 ATP + 2 H2O = cob(II)yrinate a,c diamide + 2 L-glutamate + 2 ADP + 2 phosphate + 2 H(+). Its pathway is cofactor biosynthesis; adenosylcobalamin biosynthesis; cob(II)yrinate a,c-diamide from sirohydrochlorin (anaerobic route): step 10/10. Catalyzes the ATP-dependent amidation of the two carboxylate groups at positions a and c of cobyrinate, using either L-glutamine or ammonia as the nitrogen source. The sequence is that of Cobyrinate a,c-diamide synthase from Fusobacterium nucleatum subsp. nucleatum (strain ATCC 25586 / DSM 15643 / BCRC 10681 / CIP 101130 / JCM 8532 / KCTC 2640 / LMG 13131 / VPI 4355).